We begin with the raw amino-acid sequence, 434 residues long: Glucose-6-phosphate 1-dehydrogenase (434 aa).

NADP(+)-binding positions include 7–14 (GSSGDLAK), arginine 36, tyrosine 93, and lysine 112. Residues lysine 112, 137-141 (HYLLK), glutamate 175, and aspartate 193 contribute to the D-glucose 6-phosphate site. Residue histidine 198 is the Proton acceptor of the active site. Residues lysine 280 and lysine 285 each coordinate D-glucose 6-phosphate. Arginine 286 is an NADP(+) binding site.

This sequence belongs to the glucose-6-phosphate dehydrogenase family.

The enzyme catalyses D-glucose 6-phosphate + NADP(+) = 6-phospho-D-glucono-1,5-lactone + NADPH + H(+). It functions in the pathway carbohydrate degradation; pentose phosphate pathway; D-ribulose 5-phosphate from D-glucose 6-phosphate (oxidative stage): step 1/3. In terms of biological role, catalyzes the rate-limiting step of the oxidative pentose-phosphate pathway, which represents a route for the dissimilation of carbohydrates besides glycolysis. The main function of this enzyme is to provide reducing power (NADPH) and pentose phosphates for fatty acid and nucleic acid synthesis. The sequence is that of Glucose-6-phosphate 1-dehydrogenase (ZWF1) from Encephalitozoon cuniculi (strain GB-M1) (Microsporidian parasite).